Here is a 667-residue protein sequence, read N- to C-terminus: Probable potassium transport system protein Kup (667 aa).

12 consecutive transmembrane segments (helical) span residues 16–36, 58–78, 101–121, 146–166, 167–187, 221–241, 253–273, 294–314, 343–363, 373–393, 399–419, and 431–451; these read GFII…LYTM, VSLI…LIAL, WLII…ALTP, TNVI…QRFG, TGVI…VLGI, IFIL…YSDL, WPFV…WILA, VYLV…LISG, LYIP…VLYF, YGLA…YYLI, PLLA…FFLA, and VVVL…GTVI.

This sequence belongs to the HAK/KUP transporter (TC 2.A.72) family.

The protein resides in the cell membrane. It catalyses the reaction K(+)(in) + H(+)(in) = K(+)(out) + H(+)(out). Functionally, transport of potassium into the cell. Likely operates as a K(+):H(+) symporter. The protein is Probable potassium transport system protein Kup of Streptococcus equi subsp. zooepidemicus (strain H70).